An 81-amino-acid chain; its full sequence is U-poneritoxin(01)-Om6a (81 aa).

The first 21 residues, 1 to 21, serve as a signal peptide directing secretion; that stretch reads MRRSYVLLAFAIVLIISIISA. Positions 22–43 are excised as a propeptide; it reads QVEADASSDAFADAVADAVADP. Ala-79 carries the alanine amide modification.

It belongs to the formicidae venom precursor-01 superfamily. In terms of processing, truncated sequences of this peptide have also been found in the venom. It is possible they have been cleaved in the venom. In terms of tissue distribution, expressed by the venom gland.

It is found in the secreted. In terms of biological role, cationic amphipathic alpha-helical peptide with antimicrobial activities against E.coli (MIC=3.1), and S.aureus (MIC=3.1 uM). Also shows histamine-releasing activity (33.6% at 10 uM). Does not have activity against S.cerevisiae. Does not show hemolytic activity, even at 50 uM. The chain is U-poneritoxin(01)-Om6a from Odontomachus monticola (Trap-jaw ant).